Here is a 514-residue protein sequence, read N- to C-terminus: Bifunctional purine biosynthesis protein PurH (514 aa).

The MGS-like domain occupies 1 to 145 (MIKRALISVS…KNYQDVVVIV (145 aa)).

The protein belongs to the PurH family.

It catalyses the reaction (6R)-10-formyltetrahydrofolate + 5-amino-1-(5-phospho-beta-D-ribosyl)imidazole-4-carboxamide = 5-formamido-1-(5-phospho-D-ribosyl)imidazole-4-carboxamide + (6S)-5,6,7,8-tetrahydrofolate. The catalysed reaction is IMP + H2O = 5-formamido-1-(5-phospho-D-ribosyl)imidazole-4-carboxamide. It functions in the pathway purine metabolism; IMP biosynthesis via de novo pathway; 5-formamido-1-(5-phospho-D-ribosyl)imidazole-4-carboxamide from 5-amino-1-(5-phospho-D-ribosyl)imidazole-4-carboxamide (10-formyl THF route): step 1/1. Its pathway is purine metabolism; IMP biosynthesis via de novo pathway; IMP from 5-formamido-1-(5-phospho-D-ribosyl)imidazole-4-carboxamide: step 1/1. The protein is Bifunctional purine biosynthesis protein PurH of Acetivibrio thermocellus (strain ATCC 27405 / DSM 1237 / JCM 9322 / NBRC 103400 / NCIMB 10682 / NRRL B-4536 / VPI 7372) (Clostridium thermocellum).